The primary structure comprises 313 residues: Aspartate carbamoyltransferase catalytic subunit (313 aa).

Positions 58 and 59 each coordinate carbamoyl phosphate. Lysine 86 is an L-aspartate binding site. Residues arginine 108, histidine 136, and glutamine 139 each contribute to the carbamoyl phosphate site. 2 residues coordinate L-aspartate: arginine 169 and arginine 223. The carbamoyl phosphate site is built by glycine 265 and proline 266.

This sequence belongs to the aspartate/ornithine carbamoyltransferase superfamily. ATCase family. In terms of assembly, heterododecamer (2C3:3R2) of six catalytic PyrB chains organized as two trimers (C3), and six regulatory PyrI chains organized as three dimers (R2).

It carries out the reaction carbamoyl phosphate + L-aspartate = N-carbamoyl-L-aspartate + phosphate + H(+). The protein operates within pyrimidine metabolism; UMP biosynthesis via de novo pathway; (S)-dihydroorotate from bicarbonate: step 2/3. In terms of biological role, catalyzes the condensation of carbamoyl phosphate and aspartate to form carbamoyl aspartate and inorganic phosphate, the committed step in the de novo pyrimidine nucleotide biosynthesis pathway. In Anaeromyxobacter dehalogenans (strain 2CP-1 / ATCC BAA-258), this protein is Aspartate carbamoyltransferase catalytic subunit.